Here is a 143-residue protein sequence, read N- to C-terminus: Mini-ribonuclease 3 (143 aa).

D35 is a catalytic residue.

Belongs to the MrnC RNase family. Homodimer. Mg(2+) serves as cofactor.

It is found in the cytoplasm. Its function is as follows. Involved in correct processing of both the 5' and 3' ends of 23S rRNA precursor. Processes 30S rRNA precursor transcript even in absence of ribonuclease 3 (Rnc); Rnc processes 30S rRNA into smaller rRNA precursors. This Synechocystis sp. (strain ATCC 27184 / PCC 6803 / Kazusa) protein is Mini-ribonuclease 3.